Consider the following 237-residue polypeptide: Large ribosomal subunit protein uL1 (237 aa).

The protein belongs to the universal ribosomal protein uL1 family. In terms of assembly, part of the 50S ribosomal subunit.

Binds directly to 23S rRNA. The L1 stalk is quite mobile in the ribosome, and is involved in E site tRNA release. Its function is as follows. Protein L1 is also a translational repressor protein, it controls the translation of the L11 operon by binding to its mRNA. The chain is Large ribosomal subunit protein uL1 from Dehalococcoides mccartyi (strain ATCC BAA-2100 / JCM 16839 / KCTC 5957 / BAV1).